We begin with the raw amino-acid sequence, 158 residues long: S-ribosylhomocysteine lyase (158 aa).

Residues His-54, His-58, and Cys-124 each coordinate Fe cation.

Belongs to the LuxS family. Homodimer. Fe cation is required as a cofactor.

The catalysed reaction is S-(5-deoxy-D-ribos-5-yl)-L-homocysteine = (S)-4,5-dihydroxypentane-2,3-dione + L-homocysteine. Functionally, involved in the synthesis of autoinducer 2 (AI-2) which is secreted by bacteria and is used to communicate both the cell density and the metabolic potential of the environment. The regulation of gene expression in response to changes in cell density is called quorum sensing. Catalyzes the transformation of S-ribosylhomocysteine (RHC) to homocysteine (HC) and 4,5-dihydroxy-2,3-pentadione (DPD). The chain is S-ribosylhomocysteine lyase from Limosilactobacillus reuteri (strain DSM 20016) (Lactobacillus reuteri).